Consider the following 110-residue polypeptide: Keratin, type I cytoskeletal 19 (110 aa).

The tract at residues 1–8 is head; that stretch reads FGSGGVFR. S3 bears the Phosphoserine mark. The IF rod domain occupies 7-110; that stretch reads FRITMQNLND…KLEQEIATYR (104 aa). R8 is modified (omega-N-methylarginine). The interval 9–42 is coil 1A; it reads ITMQNLNDRLASYLDKVRALEQANGELEVKIRDW. The linker 1 stretch occupies residues 43–45; that stretch reads YQK. The segment at 46-83 is coil 1B; the sequence is IVLQIDNARTKFETEQALRVLDELTLARKNHEEEISAL. The segment at 85–110 is coil 2; the sequence is ADTERQNQEYQQLMDIKLEQEIATYR. Positions 85 to 110 are necessary for interaction with PNN; the sequence is ADTERQNQEYQQLMDIKLEQEIATYR.

This sequence belongs to the intermediate filament family. As to quaternary structure, heterotetramer of two type I and two type II keratins. Interacts with PNN and the actin-binding domain of DMD.

In terms of biological role, involved in the organization of myofibers. Together with KRT8, helps to link the contractile apparatus to dystrophin at the costameres of striated muscle. In Mesocricetus auratus (Golden hamster), this protein is Keratin, type I cytoskeletal 19.